The sequence spans 496 residues: Glutamyl-tRNA(Gln) amidotransferase subunit B, organellar chromatophore (496 aa).

Belongs to the GatB/GatE family. GatB subfamily. Subunit of the heterotrimeric GatCAB amidotransferase (AdT) complex, composed of A, B and C subunits.

Its subcellular location is the plastid. The protein localises to the organellar chromatophore. It carries out the reaction L-glutamyl-tRNA(Gln) + L-glutamine + ATP + H2O = L-glutaminyl-tRNA(Gln) + L-glutamate + ADP + phosphate + H(+). Allows the formation of correctly charged Gln-tRNA(Gln) through the transamidation of misacylated Glu-tRNA(Gln). The reaction takes place in the presence of glutamine and ATP through an activated gamma-phospho-Glu-tRNA(Gln). In Paulinella chromatophora, this protein is Glutamyl-tRNA(Gln) amidotransferase subunit B, organellar chromatophore.